The following is a 467-amino-acid chain: Cytochrome P450 monooxygenase azaI (467 aa).

Positions 1–28 (MESLAQLPGIFLPLAGCVLALSLSALLA) are cleaved as a signal peptide. A heme-binding site is contributed by cysteine 411.

The protein belongs to the cytochrome P450 family. The cofactor is heme.

It functions in the pathway secondary metabolite biosynthesis. Cytochrome P450 monooxygenase; part of the gene cluster that mediates the biosynthesis of azaphilones, a class of fungal metabolites characterized by a highly oxygenated pyrano-quinone bicyclic core and exhibiting a broad range of bioactivities. In the first step, the non-reducing polyketide synthase azaA forms the hexaketide precursor from successive condensations of five malonyl-CoA units, presumably with a simple acetyl-CoA starter unit. The reactive polyketide chain then undergoes a PT-mediated C2-C7 cyclization to afford the aromatic ring and is eventually released as an aldehyde through the R-domain. The putative ketoreductase azaE is proposed to catalyze the reduction of the terminal ketone resulting in the early culture product FK17-P2a. The monooxygenase azaH was demonstrated to be the only enzyme required to convert FK17-P2a to azanigerone E. AzaH first hydroxylates the benzaldehyde intermediate FK17-P2a at C4, which triggers the formation of the pyran-ring to afford azanigerone E. In parallel, the 2,4-dimethylhexanoyl chain is synthesized by the HR-PKS azaB and is proposed to be transferred to the C4-hydroxyl of azanigerone E by the acyltransferase azaD directly from the ACP domain of azaB. Alternatively, the 2,4-dimethyl-hexanoyl chain may be offloaded from the HR-PKS as a carboxylic acid and converted to an acyl-CoA by azaF. The resulting acyl-CoA molecule could then be taken up as a substrate by AzaD to form azanigerone B. To yield the carboxylic acid substituent in azanigerone A, the hydroxypropyl side chain of azanigerone B would need to undergo a C-C oxidative cleavage catalyzed by cytochrome P450 AzaI. AzaI is proposed to act on a vicinal diol that leads to a C-C bond scission either through an alkoxyradical intermediate or a peroxy complex. In the biosynthesis of azanigerone A, azanigerone B first undergoes hydroxylation at C10, possibly catalyzed by one of the two FAD-dependent monooxygenases encoded in the cluster, azaG or azaL, resulting in the vicinal diol azanigerone C. Oxidative cleavage of azanigerone C by azaI would yield the corresponding aldehyde derivative of azanigerone A. Finally, the dehydrogenase azaJ is proposed to convert the aldehyde functional group into the carboxylic acid, completing the conversion from azanigerone B to azanigerone A. Alternatively, the oxidation of aldehyde to carboxylic acid may be catalyzed by the same P450 enzyme azaI via consecutive oxidation or by endogenous alcohol dehydrogenase. This Aspergillus niger (strain ATCC 1015 / CBS 113.46 / FGSC A1144 / LSHB Ac4 / NCTC 3858a / NRRL 328 / USDA 3528.7) protein is Cytochrome P450 monooxygenase azaI.